A 163-amino-acid chain; its full sequence is Nucleotide-binding protein HD_0358 (163 aa).

Belongs to the YajQ family.

Functionally, nucleotide-binding protein. This chain is Nucleotide-binding protein HD_0358, found in Haemophilus ducreyi (strain 35000HP / ATCC 700724).